The following is a 309-amino-acid chain: Mitogen-activated protein kinase kinase 8 (309 aa).

Positions 53–305 (LDRISVLGSG…ASQLLNHPFL (253 aa)) constitute a Protein kinase domain. ATP is bound by residues 59–67 (LGSGNGGTV) and K82. Residue D167 is the Proton acceptor of the active site. Residues S195 and S201 each carry the phosphoserine modification. T205 bears the Phosphothreonine mark.

Belongs to the protein kinase superfamily. STE Ser/Thr protein kinase family. MAP kinase kinase subfamily. Post-translationally, phosphorylation at Ser-195 and Ser-201 by MAP kinase kinase kinases positively regulates kinase activity.

The catalysed reaction is L-seryl-[protein] + ATP = O-phospho-L-seryl-[protein] + ADP + H(+). It carries out the reaction L-threonyl-[protein] + ATP = O-phospho-L-threonyl-[protein] + ADP + H(+). The enzyme catalyses L-tyrosyl-[protein] + ATP = O-phospho-L-tyrosyl-[protein] + ADP + H(+). The sequence is that of Mitogen-activated protein kinase kinase 8 (MKK8) from Arabidopsis thaliana (Mouse-ear cress).